We begin with the raw amino-acid sequence, 501 residues long: Aminoaldehyde dehydrogenase ALDH10A8, chloroplastic (501 aa).

Residues aspartate 99 and leucine 189 each contribute to the Na(+) site. Residues 238–243 and 238–245 contribute to the NAD(+) site; these read GSFATG and GSFATGSK. Glutamate 260 serves as the catalytic Proton acceptor. NAD(+)-binding residues include cysteine 294 and glutamate 393. Residue cysteine 294 is the Nucleophile of the active site.

It belongs to the aldehyde dehydrogenase family. As to quaternary structure, homodimer. As to expression, widely expressed.

It localises to the cytoplasm. It is found in the plastid. The protein localises to the chloroplast. It carries out the reaction 4-aminobutanal + NAD(+) + H2O = 4-aminobutanoate + NADH + 2 H(+). The catalysed reaction is 3-aminopropanal + NAD(+) + H2O = beta-alanine + NADH + 2 H(+). It catalyses the reaction 4-(trimethylamino)butanal + NAD(+) + H2O = 4-(trimethylamino)butanoate + NADH + 2 H(+). The enzyme catalyses 4-guanidinobutanal + NAD(+) + H2O = 4-guanidinobutanoate + NADH + 2 H(+). It carries out the reaction betaine aldehyde + NAD(+) + H2O = glycine betaine + NADH + 2 H(+). It functions in the pathway amine and polyamine biosynthesis; betaine biosynthesis via choline pathway; betaine from betaine aldehyde: step 1/1. Dehydrogenase that catalyzes the oxidation of several aminoaldehydes. Metabolizes and detoxifies aldehyde products of polyamine degradation to non-toxic amino acids. Catalyzes the oxidation of 4-aminobutanal and 3-aminopropanal to 4-aminobutanoate and beta-alanine, respectively. Production of 4-aminobutinoate by ALDH10A8 may confer tolerance to salt stress. Catalyzes the oxidation of 4-(trimethylamino)butanal and 4-guanidinobutanal to 4-trimethylammoniobutanoate and 4-guanidinobutanoate, respectively. Involved in glycine betaine biosynthesis. Catalyzes with low efficiency the oxidation of betaine aldehyde to glycine betaine. The polypeptide is Aminoaldehyde dehydrogenase ALDH10A8, chloroplastic (Arabidopsis thaliana (Mouse-ear cress)).